The sequence spans 2104 residues: 5'-3' DNA helicase ZGRF1 (2104 aa).

Over residues 335-345 (SSPIHSSTVDG) the composition is skewed to polar residues. The interval 335–359 (SSPIHSSTVDGNDTERKPKAQEDDV) is disordered. Ser336 is subject to Phosphoserine. Residues 347 to 356 (DTERKPKAQE) are compositionally biased toward basic and acidic residues. Residues Ser793 and Ser864 each carry the phosphoserine modification. The Zn(2+) site is built by Cys1349, His1351, Cys1374, and Cys1382. Residues 1349 to 1391 (CHHSQPAKLVMVKKEGPNKGRLFYTCDGPKADRCKFFKWLEDV) form a GRF-type zinc finger. The tract at residues 2085 to 2104 (VEEKQKKKSEKEKSKDKSHS) is disordered.

Interacts with DNA repair protein RAD51; the interaction promotes RAD51 strand exchange activity. Also interacts with DNA repair proteins EXO1 and BRCA1; the interactions are increased following DNA damage induction.

It localises to the nucleus. The enzyme catalyses ATP + H2O = ADP + phosphate + H(+). The catalysed reaction is Couples ATP hydrolysis with the unwinding of duplex DNA at the replication fork by translocating in the 5'-3' direction. This creates two antiparallel DNA single strands (ssDNA). The leading ssDNA polymer is the template for DNA polymerase III holoenzyme which synthesizes a continuous strand.. Its function is as follows. 5'-3' DNA helicase which is recruited to sites of DNA damage and promotes repair of replication-blocking DNA lesions through stimulation of homologous recombination (HR). Promotes HR by directly stimulating RAD51-mediated strand exchange activity. Not required to load RAD51 at sites of DNA damage but promotes recombinational repair after RAD51 recruitment. Also promotes HR by positively regulating EXO1-mediated DNA end resection of double-strand breaks. Required for recruitment of replication protein RPA2 to DNA damage sites. Promotes the initiation of the G2/M checkpoint but not its maintenance. Catalyzes Holliday junction branch migration and dissociation of D-loops and DNA flaps. In Homo sapiens (Human), this protein is 5'-3' DNA helicase ZGRF1 (ZGRF1).